The chain runs to 514 residues: HMG box-containing protein 1 (514 aa).

Residues 150 to 182 form a disordered region; that stretch reads ARPPPVSSSSKSEPAFPHHHWKEETPVRHERAN. Basic and acidic residues predominate over residues 170-182; that stretch reads WKEETPVRHERAN. One can recognise an AXH domain in the interval 203-345; it reads WCNSWPSTVW…PPGHLDAINF (143 aa). The HMG box DNA-binding region spans 434 to 502; the sequence is CKRPMNAFML…EQKRLNPDCW (69 aa).

Binds TCF4. Binds RB1. Binds the second PAH repeat of SIN3A. In terms of processing, ubiquitinated by the CTLH E3 ubiquitin-protein ligase complex, leading to subsequent proteasomal degradation.

It localises to the nucleus. In terms of biological role, transcriptional repressor that binds to the promoter region of target genes. Plays a role in the regulation of the cell cycle and of the Wnt pathway. Binds preferentially to the sequence 5'-TTCATTCATTCA-3'. Binding to the histone H1.0 promoter is enhanced by interaction with RB1. Disrupts the interaction between DNA and TCF4. This Pongo abelii (Sumatran orangutan) protein is HMG box-containing protein 1 (HBP1).